The chain runs to 277 residues: MEMO1 family protein Tpet_0837 (277 aa).

This sequence belongs to the MEMO1 family.

This chain is MEMO1 family protein Tpet_0837, found in Thermotoga petrophila (strain ATCC BAA-488 / DSM 13995 / JCM 10881 / RKU-1).